Reading from the N-terminus, the 236-residue chain is Syntaxin-8 (236 aa).

At 1 to 215 (MAPDPWFSTY…LVDRKSTSCG (215 aa)) the chain is on the cytoplasmic side. Residues 42–65 (VTIRALLQKLKEKIALLKDLLLRA) are a coiled coil. The t-SNARE coiled-coil homology domain occupies 145 to 207 (QKIIQEQDAG…RTETRRVNLV (63 aa)). S160 bears the Phosphoserine mark. Residues 216-232 (MIMVILLLLVAIVVVAV) traverse the membrane as a helical; Anchor for type IV membrane protein segment. The Vesicular portion of the chain corresponds to 233–236 (WPTK).

Belongs to the syntaxin family. As to quaternary structure, forms a SNARE complex with STX7, VTI1B and VAMP8 which functions in the homotypic fusion of late endosomes. Part of the SNARE core complex containing STX7, VAMP8 and VTI1B. Interacts with VAMP8. Interacts with HECTD3. Interacts with TPC1. Post-translationally, ubiquitinated by HECTD3.

The protein resides in the membrane. Functionally, vesicle trafficking protein that functions in the early secretory pathway, possibly by mediating retrograde transport from cis-Golgi membranes to the ER. This is Syntaxin-8 (STX8) from Bos taurus (Bovine).